The primary structure comprises 340 residues: MNIKDRTSEFQQSVLSYKKRNKNFREQQRERLQEKESENFANNTTGNGKSVSEFQKKASGIAHEISSTAQLLSKLAVLAKRKPMFNDNPVEIAELSFLIKRKIYAIEQSLVQLSQLKKTDVNGNTSNQSSKQPSAVQHSKNVVNLLNTQMKNISGSFKDVLEERQRLEMANKDRWQKLTTDTGHAPADDQTQSNHAADLTTYNNSNPFMTSLLDESSEKNNNSSNQGELSFPQNDSQLMLMEEGQLSNNVYLQERNRAVETIESTIQEVGNLFQQLASMVQEQGEVIQRIDANVDDIDLNISGAQRELLKYFDRIKSNRWLAAKVFFIIFVFFVIWVLVN.

Over 1 to 319 the chain is Cytoplasmic; it reads MNIKDRTSEF…KYFDRIKSNR (319 aa). The tract at residues 31–51 is disordered; sequence RLQEKESENFANNTTGNGKSV. Positions 39-51 are enriched in polar residues; it reads NFANNTTGNGKSV. The stretch at 146 to 173 forms a coiled coil; the sequence is LNTQMKNISGSFKDVLEERQRLEMANKD. Residues 180–231 form a disordered region; it reads TDTGHAPADDQTQSNHAADLTTYNNSNPFMTSLLDESSEKNNNSSNQGELSF. Residues 189 to 209 show a composition bias toward polar residues; the sequence is DQTQSNHAADLTTYNNSNPFM. A t-SNARE coiled-coil homology domain is found at 249-311; it reads NVYLQERNRA…SGAQRELLKY (63 aa). The helical; Anchor for type IV membrane protein transmembrane segment at 320 to 340 threads the bilayer; that stretch reads WLAAKVFFIIFVFFVIWVLVN.

The protein belongs to the syntaxin family. As to quaternary structure, interacts with SLY1, STF1, SFB3 and GOS1.

The protein localises to the membrane. It is found in the golgi apparatus membrane. Its function is as follows. Required for vesicular transport between the endoplasmic reticulum and the Golgi complex. Acts as a target organelle soluble NSF attachment protein receptor (t-SNARE). The sequence is that of Integral membrane protein SED5 (SED5) from Saccharomyces cerevisiae (strain ATCC 204508 / S288c) (Baker's yeast).